Consider the following 371-residue polypeptide: Glycosyltransferase 8 domain-containing protein 1 (371 aa).

Over 1 to 7 the chain is Cytoplasmic; it reads MSFRKVH. Residues 8–28 form a helical; Signal-anchor for type II membrane protein membrane-spanning segment; it reads IAIILLAAVVFLLILHHNILG. Topologically, residues 29-371 are lumenal; it reads LTDILTRQSS…RRHGEADGTK (343 aa). N-linked (GlcNAc...) asparagine glycosylation is found at N104, N249, and N257.

This sequence belongs to the glycosyltransferase 8 family.

Its subcellular location is the membrane. This Xenopus tropicalis (Western clawed frog) protein is Glycosyltransferase 8 domain-containing protein 1 (glt8d1).